The primary structure comprises 199 residues: NADH-quinone oxidoreductase subunit C (199 aa).

Belongs to the complex I 30 kDa subunit family. NDH-1 is composed of 14 different subunits. Subunits NuoB, C, D, E, F, and G constitute the peripheral sector of the complex.

The protein resides in the cell inner membrane. It catalyses the reaction a quinone + NADH + 5 H(+)(in) = a quinol + NAD(+) + 4 H(+)(out). Functionally, NDH-1 shuttles electrons from NADH, via FMN and iron-sulfur (Fe-S) centers, to quinones in the respiratory chain. The immediate electron acceptor for the enzyme in this species is believed to be ubiquinone. Couples the redox reaction to proton translocation (for every two electrons transferred, four hydrogen ions are translocated across the cytoplasmic membrane), and thus conserves the redox energy in a proton gradient. The polypeptide is NADH-quinone oxidoreductase subunit C (Roseobacter denitrificans (strain ATCC 33942 / OCh 114) (Erythrobacter sp. (strain OCh 114))).